Reading from the N-terminus, the 342-residue chain is L-threonine 3-dehydrogenase (342 aa).

A Zn(2+)-binding site is contributed by Cys38. Residues Thr40 and His43 each act as charge relay system in the active site. Residues His63, Glu64, Cys93, Cys96, Cys99, and Cys107 each contribute to the Zn(2+) site. NAD(+)-binding positions include Ile175, Asp195, Arg200, Leu262 to Ile264, and Ile286 to Tyr287.

It belongs to the zinc-containing alcohol dehydrogenase family. Homotetramer. Requires Zn(2+) as cofactor.

It localises to the cytoplasm. The catalysed reaction is L-threonine + NAD(+) = (2S)-2-amino-3-oxobutanoate + NADH + H(+). It functions in the pathway amino-acid degradation; L-threonine degradation via oxydo-reductase pathway; glycine from L-threonine: step 1/2. Its function is as follows. Catalyzes the NAD(+)-dependent oxidation of L-threonine to 2-amino-3-ketobutyrate. The chain is L-threonine 3-dehydrogenase from Burkholderia ambifaria (strain MC40-6).